An 80-amino-acid polypeptide reads, in one-letter code: UPF0291 protein YlaC (80 aa).

This sequence belongs to the UPF0291 family.

Its subcellular location is the cytoplasm. The polypeptide is UPF0291 protein YlaC (ylcA) (Lactococcus lactis subsp. lactis (strain IL1403) (Streptococcus lactis)).